Here is a 226-residue protein sequence, read N- to C-terminus: PKHD-type hydroxylase PputW619_4316 (226 aa).

Residues lysine 78 to serine 178 form the Fe2OG dioxygenase domain. 3 residues coordinate Fe cation: histidine 96, aspartate 98, and histidine 159. Position 169 (arginine 169) interacts with 2-oxoglutarate.

Requires Fe(2+) as cofactor. The cofactor is L-ascorbate.

The chain is PKHD-type hydroxylase PputW619_4316 from Pseudomonas putida (strain W619).